Consider the following 449-residue polypeptide: Heterogeneous nuclear ribonucleoprotein H (449 aa).

Met1 bears the N-acetylmethionine; in Heterogeneous nuclear ribonucleoprotein H; alternate mark. Position 2 is an N-acetylmethionine; in Heterogeneous nuclear ribonucleoprotein H, N-terminally processed (Met2). The RRM 1 domain maps to 11-90 (FVVKVRGLPW…RYVEVFKSNN (80 aa)). Ser23 carries the post-translational modification Phosphoserine. A Glycyl lysine isopeptide (Lys-Gly) (interchain with G-Cter in SUMO2) cross-link involves residue Lys35. A phosphoserine mark is found at Ser54 and Ser63. Residues Lys87 and Lys98 each participate in a glycyl lysine isopeptide (Lys-Gly) (interchain with G-Cter in SUMO2) cross-link. The region spanning 111–188 (GFVRLRGLPF…RYIEIFKSSR (78 aa)) is the RRM 2 domain. Residue Arg233 is modified to Dimethylated arginine; alternate. Arg233 bears the Omega-N-methylarginine; alternate mark. The stretch at 234-249 (GAYGGGYGGYDDYNGY) is one 1-1 repeat. The tract at residues 234–433 (GAYGGGYGGY…YGGQSSMSGY (200 aa)) is 2 X 16 AA Gly-rich approximate repeats. At Tyr246 the chain carries Phosphotyrosine. One can recognise an RRM 3 domain in the interval 289-364 (HCVHMRGLPY…RYVELFLNST (76 aa)). Ser310 is subject to Phosphoserine. 3 consecutive repeat copies span residues 354–372 (HRYVELFLNSTAGASGGAY), 374–392 (HRYVELFLNSTAGASGGAY), and 418–433 (GGYGGGYGGQSSMSGY). The 2 X 19 AA perfect repeats stretch occupies residues 354–392 (HRYVELFLNSTAGASGGAYEHRYVELFLNSTAGASGGAY).

In terms of assembly, part of a ternary complex containing FUBP2, PTBP1, PTBP2 and HNRNPH1. Identified in the spliceosome C complex. Interacts with IGF2BP1. Interacts with CUGBP1; the interaction is RNA-dependent. Interacts with MBNL1; the interaction in RNA-independent. As to expression, expressed ubiquitously.

The protein resides in the nucleus. Its subcellular location is the nucleoplasm. In terms of biological role, this protein is a component of the heterogeneous nuclear ribonucleoprotein (hnRNP) complexes which provide the substrate for the processing events that pre-mRNAs undergo before becoming functional, translatable mRNAs in the cytoplasm. Mediates pre-mRNA alternative splicing regulation. Inhibits, together with CUGBP1, insulin receptor (IR) pre-mRNA exon 11 inclusion in myoblast. Binds to the IR RNA. Binds poly(RG). The sequence is that of Heterogeneous nuclear ribonucleoprotein H (HNRNPH1) from Homo sapiens (Human).